The following is a 407-amino-acid chain: [Pyruvate dehydrogenase (acetyl-transferring)] kinase isozyme 2, mitochondrial (407 aa).

Residues 135 to 364 (LEYKDTYGDD…DAVIYLKALS (230 aa)) enclose the Histidine kinase domain. A phosphotyrosine mark is found at Tyr-215 and Tyr-216. ATP is bound by residues 251–258 (ELFKNAMR), Asp-290, 309–310 (ST), and 325–330 (GFGYGL). N6-succinyllysine is present on Lys-376.

Belongs to the PDK/BCKDK protein kinase family. In terms of assembly, homodimer, and heterodimer with PDK1. Interacts with the pyruvate dehydrogenase complex subunit DLAT, and is part of the multimeric pyruvate dehydrogenase complex that contains multiple copies of pyruvate dehydrogenase (E1), dihydrolipoamide acetyltransferase (DLAT, E2) and lipoamide dehydrogenase (DLD, E3). In terms of tissue distribution, detected in heart (at protein level).

Its subcellular location is the mitochondrion matrix. It catalyses the reaction L-seryl-[pyruvate dehydrogenase E1 alpha subunit] + ATP = O-phospho-L-seryl-[pyruvate dehydrogenase E1 alpha subunit] + ADP + H(+). In terms of biological role, kinase that plays a key role in the regulation of glucose and fatty acid metabolism and homeostasis via phosphorylation of the pyruvate dehydrogenase subunits PDHA1 and PDHA2. This inhibits pyruvate dehydrogenase activity, and thereby regulates metabolite flux through the tricarboxylic acid cycle, down-regulates aerobic respiration and inhibits the formation of acetyl-coenzyme A from pyruvate. Inhibition of pyruvate dehydrogenase decreases glucose utilization and increases fat metabolism. Mediates cellular responses to insulin. Plays an important role in maintaining normal blood glucose levels and in metabolic adaptation to nutrient availability. Via its regulation of pyruvate dehydrogenase activity, plays an important role in maintaining normal blood pH and in preventing the accumulation of ketone bodies under starvation. Plays a role in the regulation of cell proliferation and in resistance to apoptosis under oxidative stress. Plays a role in p53/TP53-mediated apoptosis. This is [Pyruvate dehydrogenase (acetyl-transferring)] kinase isozyme 2, mitochondrial (Pdk2) from Mus musculus (Mouse).